A 55-amino-acid polypeptide reads, in one-letter code: Lantibiotic epilancin 15X (55 aa).

Positions 1-24 (MKKELFDLNLNKDIEAQKSDLNPQ) are cleaved as a propeptide — cleaved by ElxP. At Ser-25 the chain carries D-lactate; by the dehydratase ElxB and the dehydrogenase ElxO. The residue at position 27 (Ser-27) is a 2,3-didehydroalanine (Ser); by the dehydratase ElxB. A 2,3-didehydrobutyrine; by the dehydratase ElxB mark is found at Thr-31 and Thr-32. Residues 36 to 40 (SKKLC) constitute a cross-link (lanthionine (Ser-Cys); by the dehydratase ElxB and the cyclase ElxC). 2 cross-links (beta-methyllanthionine (Thr-Cys); by the dehydratase ElxB and the cyclase ElxC) span residues 44–47 (TLTC) and 46–49 (TCGC). Thr-52 carries the post-translational modification 2,3-didehydrobutyrine; by the dehydratase ElxB.

Post-translationally, maturation of this lantibiotic involves the enzymatic conversion of Thr, and Ser into dehydrated AA by ElxB and the formation of thioether bonds with cysteine by the cyclase ElxC. The next steps are cleavage of the leader peptide by ElxP and membrane translocation by ElxT. The leader peptide may be removed before membrane translocation, in contrast to other lantibiotics for which the cleavage occur after translocation. This is suggested by the probable cytoplasmic localization of the serine protease ElxP that cleaves the leader peptide. In terms of processing, the N-terminal D-lactate is probably produced by dehydration of Ser-25 by ElxB, followed by proteolytic removal of the leader peptide by the serine protease ElxP and hydrolysis of the resulting new N-terminal dehydroalanine. This hydrolysis may occur spontaneously. The pyruvate group thus formed is reduced to D-lactate by the NADPH-dependent oxidoreductase ElxO. This N-terminal D-lactate protects the lantibiotic against degradation against aminopeptidase. It is not established whether the 2,3-didehydrobutyrines are the E- or Z-isomers.

Functionally, lanthionine-containing peptide antibiotic (lantibiotic) active on Gram-positive bacteria such as staphylococci, enterococci and streptococci. The bactericidal activity of lantibiotics is based on depolarization of energized bacterial cytoplasmic membranes, initiated by the formation of aqueous transmembrane pores. The protein is Lantibiotic epilancin 15X of Staphylococcus epidermidis.